Consider the following 148-residue polypeptide: Cytochrome c oxidase subunit 6, mitochondrial (148 aa).

The N-terminal 40 residues, 1–40, are a transit peptide targeting the mitochondrion; sequence MLSRAIFRNPVINRTLLRARPGAYHATRLTKNTFIQSRKY.

This sequence belongs to the cytochrome c oxidase subunit 5A family. In terms of assembly, component of the cytochrome c oxidase (complex IV, CIV), a multisubunit enzyme composed of 12 subunits. The complex is composed of a catalytic core of 3 subunits COX1, COX2 and COX3, encoded in the mitochondrial DNA, and 9 supernumerary subunits COX4, COX5A (or COX5B), COX6, COX7, COX8, COX9, COX12, COX13 and COX26, which are encoded in the nuclear genome. The complex exists as a monomer or a dimer and forms supercomplexes (SCs) in the inner mitochondrial membrane with a dimer of ubiquinol-cytochrome c oxidoreductase (cytochrome b-c1 complex, complex III, CIII), resulting in 2 different assemblies (supercomplexes III(2)IV and III(2)IV(2)). COX26 interacts with COX1, COX2, COX6 and COX9.

Its subcellular location is the mitochondrion inner membrane. The protein operates within energy metabolism; oxidative phosphorylation. In terms of biological role, component of the cytochrome c oxidase, the last enzyme in the mitochondrial electron transport chain which drives oxidative phosphorylation. The respiratory chain contains 3 multisubunit complexes succinate dehydrogenase (complex II, CII), ubiquinol-cytochrome c oxidoreductase (cytochrome b-c1 complex, complex III, CIII) and cytochrome c oxidase (complex IV, CIV), that cooperate to transfer electrons derived from NADH and succinate to molecular oxygen, creating an electrochemical gradient over the inner membrane that drives transmembrane transport and the ATP synthase. Cytochrome c oxidase is the component of the respiratory chain that catalyzes the reduction of oxygen to water. Electrons originating from reduced cytochrome c in the intermembrane space (IMS) are transferred via the dinuclear copper A center (CU(A)) of COX2 and heme A of COX1 to the active site in COX1, a binuclear center (BNC) formed by heme A3 and copper B (CU(B)). The BNC reduces molecular oxygen to 2 water molecules using 4 electrons from cytochrome c in the IMS and 4 protons from the mitochondrial matrix. COX6 may stabilize the region of CIV at the interface with CIII, supporting a role in formation or stability of the CIII(2)IV(2) SC. The chain is Cytochrome c oxidase subunit 6, mitochondrial (COX6) from Saccharomyces cerevisiae (strain ATCC 204508 / S288c) (Baker's yeast).